A 416-amino-acid polypeptide reads, in one-letter code: Glutamyl-tRNA reductase (416 aa).

Residues Thr-49–Arg-52, Ser-105, Glu-110–Gln-112, and Gln-116 each bind substrate. The active-site Nucleophile is the Cys-50. Gly-185 to Ile-190 provides a ligand contact to NADP(+).

It belongs to the glutamyl-tRNA reductase family. In terms of assembly, homodimer.

It catalyses the reaction (S)-4-amino-5-oxopentanoate + tRNA(Glu) + NADP(+) = L-glutamyl-tRNA(Glu) + NADPH + H(+). The protein operates within porphyrin-containing compound metabolism; protoporphyrin-IX biosynthesis; 5-aminolevulinate from L-glutamyl-tRNA(Glu): step 1/2. In terms of biological role, catalyzes the NADPH-dependent reduction of glutamyl-tRNA(Glu) to glutamate 1-semialdehyde (GSA). In Shewanella putrefaciens (strain CN-32 / ATCC BAA-453), this protein is Glutamyl-tRNA reductase.